We begin with the raw amino-acid sequence, 234 residues long: Chalcone--flavanone isomerase 2 (234 aa).

Threonine 50, asparagine 115, and serine 192 together coordinate substrate.

The protein belongs to the chalcone isomerase family.

The catalysed reaction is a chalcone = a flavanone.. It functions in the pathway secondary metabolite biosynthesis; flavonoid biosynthesis. Catalyzes the intramolecular cyclization of bicyclic chalcones into tricyclic (S)-flavanones. Responsible for the isomerization of 4,2',4',6'-tetrahydroxychalcone (also termed chalcone) into naringenin. The sequence is that of Chalcone--flavanone isomerase 2 (CHI2) from Vitis vinifera (Grape).